An 89-amino-acid chain; its full sequence is Small ribosomal subunit protein uS15 (89 aa).

The protein belongs to the universal ribosomal protein uS15 family. Part of the 30S ribosomal subunit. Forms a bridge to the 50S subunit in the 70S ribosome, contacting the 23S rRNA.

In terms of biological role, one of the primary rRNA binding proteins, it binds directly to 16S rRNA where it helps nucleate assembly of the platform of the 30S subunit by binding and bridging several RNA helices of the 16S rRNA. Its function is as follows. Forms an intersubunit bridge (bridge B4) with the 23S rRNA of the 50S subunit in the ribosome. This Methylobacterium nodulans (strain LMG 21967 / CNCM I-2342 / ORS 2060) protein is Small ribosomal subunit protein uS15.